We begin with the raw amino-acid sequence, 433 residues long: Protein translocase subunit SecY (433 aa).

Helical transmembrane passes span Ile-17–Gly-37, Ile-71–Val-91, Leu-117–Val-137, Gly-141–Val-161, Leu-184–Leu-204, Pro-212–Phe-232, Gly-268–Phe-288, Tyr-310–Phe-330, Leu-366–Asn-386, and Tyr-388–Asp-408.

It belongs to the SecY/SEC61-alpha family. Component of the Sec protein translocase complex. Heterotrimer consisting of SecY, SecE and SecG subunits. The heterotrimers can form oligomers, although 1 heterotrimer is thought to be able to translocate proteins. Interacts with the ribosome. Interacts with SecDF, and other proteins may be involved. Interacts with SecA.

The protein resides in the cell inner membrane. In terms of biological role, the central subunit of the protein translocation channel SecYEG. Consists of two halves formed by TMs 1-5 and 6-10. These two domains form a lateral gate at the front which open onto the bilayer between TMs 2 and 7, and are clamped together by SecE at the back. The channel is closed by both a pore ring composed of hydrophobic SecY resides and a short helix (helix 2A) on the extracellular side of the membrane which forms a plug. The plug probably moves laterally to allow the channel to open. The ring and the pore may move independently. This is Protein translocase subunit SecY from Rickettsia typhi (strain ATCC VR-144 / Wilmington).